Consider the following 229-residue polypeptide: Sec-independent protein translocase protein TatB (229 aa).

A helical membrane pass occupies residues methionine 1–glycine 21. The disordered stretch occupies residues glutamate 90–tyrosine 131. Polar residues predominate over residues proline 108 to tyrosine 131.

Belongs to the TatB family. In terms of assembly, the Tat system comprises two distinct complexes: a TatABC complex, containing multiple copies of TatA, TatB and TatC subunits, and a separate TatA complex, containing only TatA subunits. Substrates initially bind to the TatABC complex, which probably triggers association of the separate TatA complex to form the active translocon.

The protein resides in the cell inner membrane. Part of the twin-arginine translocation (Tat) system that transports large folded proteins containing a characteristic twin-arginine motif in their signal peptide across membranes. Together with TatC, TatB is part of a receptor directly interacting with Tat signal peptides. TatB may form an oligomeric binding site that transiently accommodates folded Tat precursor proteins before their translocation. This chain is Sec-independent protein translocase protein TatB, found in Psychrobacter arcticus (strain DSM 17307 / VKM B-2377 / 273-4).